An 887-amino-acid polypeptide reads, in one-letter code: Phosphatidylinositol 3-kinase catalytic subunit type 3 (887 aa).

One can recognise a C2 PI3K-type domain in the interval 35–184 (YKAVLEDPML…LAKLTKAHRQ (150 aa)). The interval 150–170 (EADGSEPTKTPGRTSSTLSED) is disordered. Polar residues predominate over residues 156-170 (PTKTPGRTSSTLSED). Thr163 carries the phosphothreonine; by AMPK modification. At Ser165 the chain carries Phosphoserine; by AMPK. Phosphoserine occurs at positions 244, 261, and 282. The PIK helical domain maps to 282–520 (SDHGLKPNAA…PKTHEMYLNV (239 aa)). Disordered stretches follow at residues 416–435 (EPTK…NSGI) and 446–468 (ITSP…SSDG). Residues 423-435 (QGSVSESVSNSGI) are compositionally biased toward low complexity. Over residues 449–459 (PLPPVSSPPPA) the composition is skewed to pro residues. The PI3K/PI4K catalytic domain maps to 605 to 871 (IPETATLFKS…LIDESVHALF (267 aa)). Residues 611–617 (LFKSALM) form a G-loop region. The tract at residues 740–748 (GVGDRHLDN) is catalytic loop. The tract at residues 759–780 (HIDFGYILGRDPKPLPPPMKLN) is activation loop.

Belongs to the PI3/PI4-kinase family. In terms of assembly, component of the PI3K (PI3KC3/PI3K-III/class III phosphatidylinositol 3-kinase) complex the core of which is composed of the catalytic subunit PIK3C3, the regulatory subunit PIK3R4 and BECN1 associating with additional regulatory/auxiliary subunits to form alternative complex forms. Alternative complex forms containing a fourth regulatory subunit in a mutually exclusive manner are: the PI3K complex I (PI3KC3-C1) containing ATG14, and the PI3K complex II (PI3KC3-C2) containing UVRAG. PI3KC3-C1 displays a V-shaped architecture with PIK3R4 serving as a bridge between PIK3C3 and the ATG14:BECN1 subcomplex. Both, PI3KC3-C1 and PI3KC3-C2, can associate with further regulatory subunits such as RUBCN, SH3GLB1/Bif-1 and AMBRA1. PI3KC3-C1 probably associates with PIK3CB. Interacts with RAB7A in the presence of PIK3R4. Interacts with AMBRA1. Interacts with BECN1P1/BECN2. Interacts with SLAMF1. May be a component of a complex composed of RAB5A (in GDP-bound form), DYN2 and PIK3C3. Interacts with NCKAP1L. Interacts with ATG14; this interaction is increased in the absence of TMEM39A. Interacts with STEEP1; the interaction is STING1-dependent and required for trafficking of STING1 from the endoplasmic reticulum. Interacts with YWHAG. Interacts with ARMC3. Requires Mn(2+) as cofactor. Ubiquitinated via 'Lys-29'- and 'Lys-48'-linked ubiquitination by UBE3C, promoting its degradation. Deubiquitination by ZRANB1/TRABID promotes its stabilization, leading to autophagosome maturation.

The protein resides in the midbody. It localises to the late endosome. It is found in the cytoplasmic vesicle. The protein localises to the autophagosome. It catalyses the reaction a 1,2-diacyl-sn-glycero-3-phospho-(1D-myo-inositol) + ATP = a 1,2-diacyl-sn-glycero-3-phospho-(1D-myo-inositol-3-phosphate) + ADP + H(+). Functionally, catalytic subunit of the PI3K complex that mediates formation of phosphatidylinositol 3-phosphate; different complex forms are believed to play a role in multiple membrane trafficking pathways: PI3KC3-C1 is involved in initiation of autophagosomes and PI3KC3-C2 in maturation of autophagosomes and endocytosis. As part of PI3KC3-C1, promotes endoplasmic reticulum membrane curvature formation prior to vesicle budding. Involved in regulation of degradative endocytic trafficking and required for the abscission step in cytokinesis, probably in the context of PI3KC3-C2. Involved in the transport of lysosomal enzyme precursors to lysosomes. Required for transport from early to late endosomes. In Sus scrofa (Pig), this protein is Phosphatidylinositol 3-kinase catalytic subunit type 3.